Consider the following 546-residue polypeptide: Probable protein kinase UbiB (546 aa).

Positions 123 to 501 constitute a Protein kinase domain; that stretch reads DFDETPLASA…SRRQGQARYL (379 aa). Residues 129 to 137 and K152 each bind ATP; that span reads LASASIAQV. The Proton acceptor role is filled by D287. A run of 2 helical transmembrane segments spans residues 496–516 and 521–541; these read GQAR…VFLL and HIEW…LGWF.

Belongs to the ABC1 family. UbiB subfamily.

It localises to the cell inner membrane. It participates in cofactor biosynthesis; ubiquinone biosynthesis [regulation]. Is probably a protein kinase regulator of UbiI activity which is involved in aerobic coenzyme Q (ubiquinone) biosynthesis. The chain is Probable protein kinase UbiB from Aeromonas salmonicida (strain A449).